The sequence spans 264 residues: Heavy metal-associated isoprenylated plant protein 17 (264 aa).

2 consecutive HMA domains span residues 32–95 (VTDA…KKIE) and 133–204 (IMEV…KERQ). The stretch at 185 to 218 (SRKLNKKMHQKIKKAEKERQEWESEMMLREAEEE) forms a coiled coil. A Cysteine methyl ester modification is found at C261. C261 is lipidated: S-farnesyl cysteine. Residues 262 to 264 (SIS) constitute a propeptide, removed in mature form.

This sequence belongs to the HIPP family.

Functionally, probable heavy-metal-binding protein. The sequence is that of Heavy metal-associated isoprenylated plant protein 17 from Arabidopsis thaliana (Mouse-ear cress).